A 206-amino-acid polypeptide reads, in one-letter code: Thiamine-phosphate synthase (206 aa).

Residues 35 to 39 and Asn67 each bind 4-amino-2-methyl-5-(diphosphooxymethyl)pyrimidine; that span reads QLRHK. Residues Asp68 and Asp87 each coordinate Mg(2+). Residue Ser106 coordinates 4-amino-2-methyl-5-(diphosphooxymethyl)pyrimidine. Residue 132–134 participates in 2-[(2R,5Z)-2-carboxy-4-methylthiazol-5(2H)-ylidene]ethyl phosphate binding; the sequence is TGS. Lys135 provides a ligand contact to 4-amino-2-methyl-5-(diphosphooxymethyl)pyrimidine. 2-[(2R,5Z)-2-carboxy-4-methylthiazol-5(2H)-ylidene]ethyl phosphate is bound at residue Gly163.

This sequence belongs to the thiamine-phosphate synthase family. It depends on Mg(2+) as a cofactor.

It carries out the reaction 2-[(2R,5Z)-2-carboxy-4-methylthiazol-5(2H)-ylidene]ethyl phosphate + 4-amino-2-methyl-5-(diphosphooxymethyl)pyrimidine + 2 H(+) = thiamine phosphate + CO2 + diphosphate. It catalyses the reaction 2-(2-carboxy-4-methylthiazol-5-yl)ethyl phosphate + 4-amino-2-methyl-5-(diphosphooxymethyl)pyrimidine + 2 H(+) = thiamine phosphate + CO2 + diphosphate. The catalysed reaction is 4-methyl-5-(2-phosphooxyethyl)-thiazole + 4-amino-2-methyl-5-(diphosphooxymethyl)pyrimidine + H(+) = thiamine phosphate + diphosphate. It functions in the pathway cofactor biosynthesis; thiamine diphosphate biosynthesis; thiamine phosphate from 4-amino-2-methyl-5-diphosphomethylpyrimidine and 4-methyl-5-(2-phosphoethyl)-thiazole: step 1/1. In terms of biological role, condenses 4-methyl-5-(beta-hydroxyethyl)thiazole monophosphate (THZ-P) and 2-methyl-4-amino-5-hydroxymethyl pyrimidine pyrophosphate (HMP-PP) to form thiamine monophosphate (TMP). The protein is Thiamine-phosphate synthase of Chlorobium phaeobacteroides (strain DSM 266 / SMG 266 / 2430).